A 759-amino-acid chain; its full sequence is uncharacterized protein (759 aa).

An MCM domain is found at 352 to 556 (VIQKLSDYAF…KDEDIADFSI (205 aa)). Position 397-404 (397-404 (SDPGVGKS)) interacts with ATP.

The protein belongs to the MCM family.

This is an uncharacterized protein from Methanocaldococcus jannaschii (strain ATCC 43067 / DSM 2661 / JAL-1 / JCM 10045 / NBRC 100440) (Methanococcus jannaschii).